The chain runs to 113 residues: Protein suex-1 (113 aa).

Residues 1–22 (MQSLLVFCLATIILSNFTEASA) form the signal peptide.

The chain is Protein suex-1 from Caenorhabditis elegans.